The primary structure comprises 285 residues: Protease HtpX homolog (285 aa).

Transmembrane regions (helical) follow at residues 7–27 (TAML…MIGG) and 30–50 (GMTI…WFSD). H131 lines the Zn(2+) pocket. Residue E132 is part of the active site. A Zn(2+)-binding site is contributed by H135. 2 helical membrane-spanning segments follow: residues 146 to 166 (ITAT…FFGG) and 177 to 197 (IAGI…QMAI). E202 contacts Zn(2+).

This sequence belongs to the peptidase M48B family. The cofactor is Zn(2+).

The protein resides in the cell inner membrane. This chain is Protease HtpX homolog, found in Burkholderia multivorans (strain ATCC 17616 / 249).